The following is a 184-amino-acid chain: ATP synthase subunit b, chloroplastic (184 aa).

The helical transmembrane segment at 27–49 threads the bilayer; that stretch reads LATNPINLSVVLGVLIFFGKGVL.

This sequence belongs to the ATPase B chain family. F-type ATPases have 2 components, F(1) - the catalytic core - and F(0) - the membrane proton channel. F(1) has five subunits: alpha(3), beta(3), gamma(1), delta(1), epsilon(1). F(0) has four main subunits: a(1), b(1), b'(1) and c(10-14). The alpha and beta chains form an alternating ring which encloses part of the gamma chain. F(1) is attached to F(0) by a central stalk formed by the gamma and epsilon chains, while a peripheral stalk is formed by the delta, b and b' chains.

Its subcellular location is the plastid. It localises to the chloroplast thylakoid membrane. In terms of biological role, f(1)F(0) ATP synthase produces ATP from ADP in the presence of a proton or sodium gradient. F-type ATPases consist of two structural domains, F(1) containing the extramembraneous catalytic core and F(0) containing the membrane proton channel, linked together by a central stalk and a peripheral stalk. During catalysis, ATP synthesis in the catalytic domain of F(1) is coupled via a rotary mechanism of the central stalk subunits to proton translocation. Component of the F(0) channel, it forms part of the peripheral stalk, linking F(1) to F(0). The polypeptide is ATP synthase subunit b, chloroplastic (Piper cenocladum (Ant piper)).